We begin with the raw amino-acid sequence, 561 residues long: FAD-binding monooxygenase tazF (561 aa).

FAD contacts are provided by residues 74 to 77 (TWLD), 86 to 87 (DI), and Tyr-92. 84–86 (GCD) is a binding site for NADP(+). NADP(+)-binding positions include 212-218 (NGSSALQ) and 235-236 (RH).

This sequence belongs to the FAD-binding monooxygenase family. FAD serves as cofactor.

Its pathway is secondary metabolite biosynthesis. Functionally, FAD-binding monooxygenase; part of the gene cluster that mediates the biosynthesis of azaterrilone A and other azaphilones, a class of fungal metabolites characterized by a highly oxygenated pyrano-quinone bicyclic core and exhibiting a broad range of bioactivities. The first step of the pathway begins with the non-reducing polyketide synthase tazA that assembles one acetyl-CoA starter unit, five malonyl-CoA units, and catalyzes a series of Claisen condensations, methylation, PT-mediated cyclization, and finally releases the first hexaketide precursor through the R-domain. The tazA product then undergoes reduction on its terminal ketone and the following pyran-ring formation by yet undetermined enzyme(s). Dehydration and enoyl reduction, possibly involving the trans-enoyl reductase tazE leads to the next intermediate. TazD is predicted as an acetyltransferase and might catalyze the acetylation steps leading to the synthesis of azaterrilone A. Azaterrilone A is not the final product of the taz pathway and both the highly reducing polyketide synthase tazB and the dual enzyme tazHJ catalyze late steps of the pathway, leading to the production of the 2 final stereoisomers that contain additional polyketide modification whose structures have still to be determined. This chain is FAD-binding monooxygenase tazF, found in Aspergillus terreus (strain NIH 2624 / FGSC A1156).